The chain runs to 911 residues: Protein translocase subunit SecA (911 aa).

Residues Gln-87, 105-109 (GEGKT), and Asp-512 each bind ATP. The span at 561–571 (RHESRRIDNQL) shows a compositional bias: basic and acidic residues. The interval 561–583 (RHESRRIDNQLRGRSGRQGDPGS) is disordered. Residues Cys-895, Cys-897, Cys-906, and His-907 each contribute to the Zn(2+) site.

The protein belongs to the SecA family. Monomer and homodimer. Part of the essential Sec protein translocation apparatus which comprises SecA, SecYEG and auxiliary proteins SecDF-YajC and YidC. It depends on Zn(2+) as a cofactor.

It localises to the cell inner membrane. The protein localises to the cytoplasm. It carries out the reaction ATP + H2O + cellular proteinSide 1 = ADP + phosphate + cellular proteinSide 2.. In terms of biological role, part of the Sec protein translocase complex. Interacts with the SecYEG preprotein conducting channel. Has a central role in coupling the hydrolysis of ATP to the transfer of proteins into and across the cell membrane, serving both as a receptor for the preprotein-SecB complex and as an ATP-driven molecular motor driving the stepwise translocation of polypeptide chains across the membrane. This chain is Protein translocase subunit SecA, found in Pseudomonas putida (strain W619).